Reading from the N-terminus, the 94-residue chain is Large ribosomal subunit protein eL33 (94 aa).

Belongs to the eukaryotic ribosomal protein eL33 family.

The sequence is that of Large ribosomal subunit protein eL33 from Aeropyrum pernix (strain ATCC 700893 / DSM 11879 / JCM 9820 / NBRC 100138 / K1).